Here is a 122-residue protein sequence, read N- to C-terminus: Large ribosomal subunit protein uL14c (122 aa).

This sequence belongs to the universal ribosomal protein uL14 family. As to quaternary structure, part of the 50S ribosomal subunit.

Its subcellular location is the plastid. The protein resides in the chloroplast. In terms of biological role, binds to 23S rRNA. The chain is Large ribosomal subunit protein uL14c from Angiopteris evecta (Mule's foot fern).